The sequence spans 358 residues: Homoserine O-succinyltransferase (358 aa).

The active-site Acyl-thioester intermediate is Cys-146. Lys-167 and Ser-196 together coordinate substrate. His-239 (proton acceptor) is an active-site residue. Glu-241 is an active-site residue. Position 253 (Arg-253) interacts with substrate.

It belongs to the MetA family.

The protein resides in the cytoplasm. It carries out the reaction L-homoserine + succinyl-CoA = O-succinyl-L-homoserine + CoA. Its pathway is amino-acid biosynthesis; L-methionine biosynthesis via de novo pathway; O-succinyl-L-homoserine from L-homoserine: step 1/1. In terms of biological role, transfers a succinyl group from succinyl-CoA to L-homoserine, forming succinyl-L-homoserine. This Nitrosococcus oceani (strain ATCC 19707 / BCRC 17464 / JCM 30415 / NCIMB 11848 / C-107) protein is Homoserine O-succinyltransferase.